Consider the following 1550-residue polypeptide: Cellulose synthase 1 (1550 aa).

The tract at residues 1–741 is catalytic; the sequence is MPEVRSSTQS…KERVLKGTVK (741 aa). 3 helical membrane passes run 26–46, 47–67, and 106–126; these read GAGLIIGVFGLCALIAATSVT, LPPEQQLIVAFVCVVIFFIVG, and GLLGTMLLVAELYALMMLFLS. The catalytic subdomain A stretch occupies residues 147 to 240; sequence EWPTVDIFVP…YILIFDCDHV (94 aa). The active site involves D189. The substrate site is built by D236 and D238. Positions 317-377 are catalytic subdomain B; that stretch reads TAIEQIGGFA…GQRVRWARGM (61 aa). The active site involves D333. 5 helical membrane-spanning segments follow: residues 398 to 418, 423 to 443, 468 to 488, 507 to 527, and 547 to 567; these read LCYLSAMTSFLFAVPRVIFLS, FLFFGQNIIAASPLALLAYAI, VYETTMALFLVRVTIVTLLSP, FDLGAVYPNIILGLIMFGGLA, and LLNSAWAMLSLIIILAAIAVG. Residues 572-647 enclose the PilZ domain; that stretch reads QKRNSHRIPA…PARIIRAGNG (76 aa). Disordered regions lie at residues 708 to 731 and 768 to 813; these read VHRSSPTKPSAGNALSDDTNNPSR and APAH…QPLA. Residues 742 to 1550 form a cyclic di-GMP binding domain region; it reads MVSLLALLTF…KQLEDERRKS (809 aa). Low complexity predominate over residues 768–796; that stretch reads APAHQPEASDLPPLPALLPATSGAAQAGS. The chain crosses the membrane as a helical span at residues 1513–1533; that stretch reads VLLVGLLGCILIVSVLARALA.

In the N-terminal section; belongs to the glycosyltransferase 2 family. It in the C-terminal section; belongs to the AcsB/BcsB family. Mg(2+) serves as cofactor.

It is found in the cell inner membrane. It carries out the reaction [(1-&gt;4)-beta-D-glucosyl](n) + UDP-alpha-D-glucose = [(1-&gt;4)-beta-D-glucosyl](n+1) + UDP + H(+). It participates in glycan metabolism; bacterial cellulose biosynthesis. Bifunctional protein comprised of a catalytic subunit and a regulatory subunit. The catalytic subunit of cellulose synthase polymerizes uridine 5'-diphosphate glucose to cellulose in a processive way. The thick cellulosic mats generated by this enzyme probably provide a specialized protective environment to the bacterium. The regulatory subunit binds bis-(3'-5') cyclic diguanylic acid (c-di-GMP). The chain is Cellulose synthase 1 (acsAB) from Novacetimonas hansenii (Komagataeibacter hansenii).